The following is a 212-amino-acid chain: Thiamine-phosphate synthase (212 aa).

Residues 41-45 (QYREK) and Asp76 each bind 4-amino-2-methyl-5-(diphosphooxymethyl)pyrimidine. Mg(2+) is bound by residues Asp77 and Asp96. A 4-amino-2-methyl-5-(diphosphooxymethyl)pyrimidine-binding site is contributed by Ser114. 141-143 (TTS) serves as a coordination point for 2-[(2R,5Z)-2-carboxy-4-methylthiazol-5(2H)-ylidene]ethyl phosphate. Position 144 (Lys144) interacts with 4-amino-2-methyl-5-(diphosphooxymethyl)pyrimidine. 2-[(2R,5Z)-2-carboxy-4-methylthiazol-5(2H)-ylidene]ethyl phosphate contacts are provided by residues Gly172 and 192–193 (IS).

This sequence belongs to the thiamine-phosphate synthase family. Mg(2+) serves as cofactor.

It catalyses the reaction 2-[(2R,5Z)-2-carboxy-4-methylthiazol-5(2H)-ylidene]ethyl phosphate + 4-amino-2-methyl-5-(diphosphooxymethyl)pyrimidine + 2 H(+) = thiamine phosphate + CO2 + diphosphate. It carries out the reaction 2-(2-carboxy-4-methylthiazol-5-yl)ethyl phosphate + 4-amino-2-methyl-5-(diphosphooxymethyl)pyrimidine + 2 H(+) = thiamine phosphate + CO2 + diphosphate. The catalysed reaction is 4-methyl-5-(2-phosphooxyethyl)-thiazole + 4-amino-2-methyl-5-(diphosphooxymethyl)pyrimidine + H(+) = thiamine phosphate + diphosphate. Its pathway is cofactor biosynthesis; thiamine diphosphate biosynthesis; thiamine phosphate from 4-amino-2-methyl-5-diphosphomethylpyrimidine and 4-methyl-5-(2-phosphoethyl)-thiazole: step 1/1. Condenses 4-methyl-5-(beta-hydroxyethyl)thiazole monophosphate (THZ-P) and 2-methyl-4-amino-5-hydroxymethyl pyrimidine pyrophosphate (HMP-PP) to form thiamine monophosphate (TMP). This Leuconostoc citreum (strain KM20) protein is Thiamine-phosphate synthase.